A 206-amino-acid chain; its full sequence is MARYLGPKLKLSRREGTDLFLKSGVRAIDTKCKIEQPPGQHGARKPRLSDYGVQLREKQKVRRIYGVLERQFRNYYKEAARLKGNTGANLLQLLEGRLDNVVYRMGFGATRAESRQLVSHKAIMVNGRVVNIASYQVSPNDVVSIREKAKKQSRVKAALELAEQREKPTWLEVDAVKMEGVFKRIPERTDLSADINEHLIVELYSK.

An S4 RNA-binding domain is found at 96 to 156 (GRLDNVVYRM…EKAKKQSRVK (61 aa)).

This sequence belongs to the universal ribosomal protein uS4 family. Part of the 30S ribosomal subunit. Contacts protein S5. The interaction surface between S4 and S5 is involved in control of translational fidelity.

One of the primary rRNA binding proteins, it binds directly to 16S rRNA where it nucleates assembly of the body of the 30S subunit. Functionally, with S5 and S12 plays an important role in translational accuracy. In Yersinia enterocolitica serotype O:8 / biotype 1B (strain NCTC 13174 / 8081), this protein is Small ribosomal subunit protein uS4.